The sequence spans 956 residues: Valine--tRNA ligase (956 aa).

The 'HIGH' region signature appears at 69–79; that stretch reads PNITGVLHMGH. Positions 566–570 match the 'KMSKS' region motif; the sequence is KMSKS. Lys569 is a binding site for ATP. Residues 885 to 911 adopt a coiled-coil conformation; sequence LCARLQKAWQKARQKVQQVERKLADAQ.

This sequence belongs to the class-I aminoacyl-tRNA synthetase family. ValS type 1 subfamily. Monomer.

Its subcellular location is the cytoplasm. The catalysed reaction is tRNA(Val) + L-valine + ATP = L-valyl-tRNA(Val) + AMP + diphosphate. Catalyzes the attachment of valine to tRNA(Val). As ValRS can inadvertently accommodate and process structurally similar amino acids such as threonine, to avoid such errors, it has a 'posttransfer' editing activity that hydrolyzes mischarged Thr-tRNA(Val) in a tRNA-dependent manner. This Treponema pallidum (strain Nichols) protein is Valine--tRNA ligase.